A 423-amino-acid polypeptide reads, in one-letter code: MLDPKILRQNLEHVVEKLRRRGFEMDSDTFLQLENKRKEAQLAIQSFQTKRNQLSKTIGMAKSKGENPEPLMAEVSQLNDELKQEEANFETIQKAFSDFQLAIPNLPHDSVPDGKSENDNREIRQWGAPPGFDFTPKDHTVLGERDNQLDFEAAAKLSGARFVVLRGSLARAHRALAQFMLDLHTDQHGYEEVYVPYLVHEECLYGTGQLPKFREEQFQVAGDRNFFLVPTGEVPLVNLARDEIIEAPALPKKWVAQTPCFRSEAGSYGKDVRGMIRQHQFQKVELVQLVQPENSYQTLEEITRQAEKVLQLLALPYRVVELCAGDLGFAAAKTYDLEVWLPSQNKYREISSCSNCEDFQARRIQARWRNPKTGKPELLHTLNGSGLAVGRTLVAVMENYQQADGHIRVPDALKSYMGGVDYF.

Residue 231 to 233 coordinates L-serine; it reads TGE. Residue 262–264 coordinates ATP; that stretch reads RSE. Position 285 (Glu285) interacts with L-serine. Position 349 to 352 (349 to 352) interacts with ATP; that stretch reads EISS. Ser385 contributes to the L-serine binding site.

The protein belongs to the class-II aminoacyl-tRNA synthetase family. Type-1 seryl-tRNA synthetase subfamily. As to quaternary structure, homodimer. The tRNA molecule binds across the dimer.

It localises to the cytoplasm. It carries out the reaction tRNA(Ser) + L-serine + ATP = L-seryl-tRNA(Ser) + AMP + diphosphate + H(+). The catalysed reaction is tRNA(Sec) + L-serine + ATP = L-seryl-tRNA(Sec) + AMP + diphosphate + H(+). It functions in the pathway aminoacyl-tRNA biosynthesis; selenocysteinyl-tRNA(Sec) biosynthesis; L-seryl-tRNA(Sec) from L-serine and tRNA(Sec): step 1/1. Its function is as follows. Catalyzes the attachment of serine to tRNA(Ser). Is also able to aminoacylate tRNA(Sec) with serine, to form the misacylated tRNA L-seryl-tRNA(Sec), which will be further converted into selenocysteinyl-tRNA(Sec). In Coxiella burnetii (strain CbuK_Q154) (Coxiella burnetii (strain Q154)), this protein is Serine--tRNA ligase.